The sequence spans 512 residues: Probable cytochrome P450 6d2 (512 aa).

Cysteine 457 contributes to the heme binding site.

The protein belongs to the cytochrome P450 family. Heme serves as cofactor.

The protein localises to the endoplasmic reticulum membrane. Its subcellular location is the microsome membrane. May be involved in the metabolism of insect hormones and in the breakdown of synthetic insecticides. The chain is Probable cytochrome P450 6d2 (Cyp6d2) from Drosophila melanogaster (Fruit fly).